Consider the following 185-residue polypeptide: Large ribosomal subunit protein uL22 (185 aa).

Belongs to the universal ribosomal protein uL22 family.

The sequence is that of Large ribosomal subunit protein uL22 (RPL17) from Debaryomyces hansenii (strain ATCC 36239 / CBS 767 / BCRC 21394 / JCM 1990 / NBRC 0083 / IGC 2968) (Yeast).